The primary structure comprises 294 residues: ATP phosphoribosyltransferase (294 aa).

This sequence belongs to the ATP phosphoribosyltransferase family. Long subfamily. Requires Mg(2+) as cofactor.

Its subcellular location is the cytoplasm. It catalyses the reaction 1-(5-phospho-beta-D-ribosyl)-ATP + diphosphate = 5-phospho-alpha-D-ribose 1-diphosphate + ATP. Its pathway is amino-acid biosynthesis; L-histidine biosynthesis; L-histidine from 5-phospho-alpha-D-ribose 1-diphosphate: step 1/9. Its activity is regulated as follows. Feedback inhibited by histidine. In terms of biological role, catalyzes the condensation of ATP and 5-phosphoribose 1-diphosphate to form N'-(5'-phosphoribosyl)-ATP (PR-ATP). Has a crucial role in the pathway because the rate of histidine biosynthesis seems to be controlled primarily by regulation of HisG enzymatic activity. In Chlorobium phaeobacteroides (strain DSM 266 / SMG 266 / 2430), this protein is ATP phosphoribosyltransferase.